The chain runs to 113 residues: Major basic nuclear protein 1 (113 aa).

The segment at 1-20 (MAPKMKAAMKAMKAPAMKGK) is disordered.

The protein localises to the nucleus. This Crypthecodinium cohnii (Dinoflagellate) protein is Major basic nuclear protein 1 (HCc1).